Consider the following 65-residue polypeptide: Large ribosomal subunit protein bL35 (65 aa).

The protein belongs to the bacterial ribosomal protein bL35 family.

The polypeptide is Large ribosomal subunit protein bL35 (Psychrobacter arcticus (strain DSM 17307 / VKM B-2377 / 273-4)).